Reading from the N-terminus, the 455-residue chain is tRNA modification GTPase MnmE (455 aa).

Arg24, Glu81, and Lys120 together coordinate (6S)-5-formyl-5,6,7,8-tetrahydrofolate. A TrmE-type G domain is found at 216-378; that stretch reads GMTVVIAGRP…LREHLKHCMG (163 aa). Residue Asn226 participates in K(+) binding. Residues 226–231, 245–251, 270–273, and 335–338 each bind GTP; these read NAGKSS, TDIAGTT, DTAG, and NKAD. Ser230 contacts Mg(2+). Residues Thr245, Ile247, and Thr250 each coordinate K(+). Thr251 is a Mg(2+) binding site. (6S)-5-formyl-5,6,7,8-tetrahydrofolate is bound at residue Lys455.

It belongs to the TRAFAC class TrmE-Era-EngA-EngB-Septin-like GTPase superfamily. TrmE GTPase family. In terms of assembly, homodimer. Heterotetramer of two MnmE and two MnmG subunits. It depends on K(+) as a cofactor.

It localises to the cytoplasm. Exhibits a very high intrinsic GTPase hydrolysis rate. Involved in the addition of a carboxymethylaminomethyl (cmnm) group at the wobble position (U34) of certain tRNAs, forming tRNA-cmnm(5)s(2)U34. The protein is tRNA modification GTPase MnmE of Stutzerimonas stutzeri (strain A1501) (Pseudomonas stutzeri).